The primary structure comprises 887 residues: 3-hydroxy-3-methylglutaryl-coenzyme A reductase (887 aa).

Residues 1-9 (MLSRLFRMH) are Cytoplasmic-facing. Residues 10-39 (GLFVASHPWEVIVGTVTLTICMMSMNMFTG) form a helical membrane-spanning segment. Over 40–56 (NNKICGWNYECPKFEED) the chain is Lumenal. A helical membrane pass occupies residues 57 to 78 (VLSSDIIILTITRCIAILYIYF). Positions 61–218 (DIIILTITRC…MTFFPACVSL (158 aa)) constitute an SSD domain. The INSIG-binding motif signature appears at 75 to 78 (YIYF). Over 79–89 (QFQNLRQLGSK) the chain is Cytoplasmic. A Glycyl lysine isopeptide (Lys-Gly) (interchain with G-Cter in ubiquitin) cross-link involves residue Lys-89. The helical transmembrane segment at 90-114 (YILGIAGLFTIFSSFVFSTVVIHFL) threads the bilayer. Residues 115 to 123 (DKELTGLNE) are Lumenal-facing. A helical membrane pass occupies residues 124 to 149 (ALPFFLLLIDLSRASALAKFALSSNS). Residues 150–159 (QDEVRENIAR) lie on the Cytoplasmic side of the membrane. Residues 160-187 (GMAILGPTFTLDALVECLVIGVGTMSGV) traverse the membrane as a helical segment. The Lumenal portion of the chain corresponds to 188 to 191 (RQLE). A helical membrane pass occupies residues 192–220 (IMCCFGCMSVLANYFVFMTFFPACVSLVL). The Cytoplasmic portion of the chain corresponds to 221–248 (ELSRESREGRPIWQLSHFARVLEEEENK). Lys-248 participates in a covalent cross-link: Glycyl lysine isopeptide (Lys-Gly) (interchain with G-Cter in ubiquitin). A helical membrane pass occupies residues 249-275 (PNPVTQRVKMIMSLGLVLVHAHSRWIA). Over 276–314 (DPSPQNSTAEQAKVSLGLDEDVSKRIEPSVSLWQFYLSK) the chain is Lumenal. A glycan (N-linked (GlcNAc...) asparagine) is linked at Asn-281. A helical membrane pass occupies residues 315–339 (MISMDIEQVITLSLAFLLAVKYIFF). Topologically, residues 340-887 (EQAETESTLS…LQGTCTKKAA (548 aa)) are cytoplasmic. Active-site charge relay system residues include Glu-558, Lys-690, and Asp-766. His-865 acts as the Proton donor in catalysis. At Ser-871 the chain carries Phosphoserine.

It belongs to the HMG-CoA reductase family. In terms of assembly, homotetramer. Homodimer. Interacts (via its SSD) with INSIG1; the interaction, accelerated by sterols, leads to the recruitment of HMGCR to AMFR/gp78 for its ubiquitination by the sterol-mediated ERAD pathway. Interacts with UBIAD1. Post-translationally, undergoes sterol-mediated ubiquitination and ER-associated degradation (ERAD). Accumulation of sterols in the endoplasmic reticulum (ER) membrane, triggers binding of the reductase to the ER membrane protein INSIG1 or INSIG2. The INSIG1 binding leads to the recruitment of the ubiquitin ligase, AMFR/gp78, RNF139 or RNF145, initiating ubiquitination of the reductase. The ubiquitinated reductase is then extracted from the ER membrane and delivered to cytosolic 26S proteosomes by a mechanism probably mediated by the ATPase Valosin-containing protein VCP/p97. The INSIG2-binding leads to the recruitment of the ubiquitin ligase RNF139, initiating ubiquitination of the reductase. Lys-248 is the main site of ubiquitination. Ubiquitination is enhanced by the presence of a geranylgeranylated protein. In terms of processing, N-glycosylated. Deglycosylated by NGLY1 on release from the endoplasmic reticulum (ER) in a sterol-mediated manner. Phosphorylated. Phosphorylation at Ser-871 reduces the catalytic activity.

It localises to the endoplasmic reticulum membrane. It is found in the peroxisome membrane. The catalysed reaction is (R)-mevalonate + 2 NADP(+) + CoA = (3S)-3-hydroxy-3-methylglutaryl-CoA + 2 NADPH + 2 H(+). The protein operates within metabolic intermediate biosynthesis; (R)-mevalonate biosynthesis; (R)-mevalonate from acetyl-CoA: step 3/3. Regulated by a negative feedback mechanism through sterols and non-sterol metabolites derived from mevalonate. Phosphorylation at Ser-871 down-regulates the catalytic activity. Its function is as follows. Catalyzes the conversion of (3S)-hydroxy-3-methylglutaryl-CoA (HMG-CoA) to mevalonic acid, the rate-limiting step in the synthesis of cholesterol and other isoprenoids, thus plays a critical role in cellular cholesterol homeostasis. This chain is 3-hydroxy-3-methylglutaryl-coenzyme A reductase (Hmgcr), found in Mus musculus (Mouse).